A 377-amino-acid chain; its full sequence is Spermidine/putrescine import ATP-binding protein PotA (377 aa).

Residues 18 to 248 (IRLSGISKSF…PKNLFVARFI (231 aa)) form the ABC transporter domain. 50–57 (GPSGCGKT) is an ATP binding site.

The protein belongs to the ABC transporter superfamily. Spermidine/putrescine importer (TC 3.A.1.11.1) family. The complex is composed of two ATP-binding proteins (PotA), two transmembrane proteins (PotB and PotC) and a solute-binding protein (PotD).

Its subcellular location is the cell inner membrane. The catalysed reaction is ATP + H2O + polyamine-[polyamine-binding protein]Side 1 = ADP + phosphate + polyamineSide 2 + [polyamine-binding protein]Side 1.. Functionally, part of the ABC transporter complex PotABCD involved in spermidine/putrescine import. Responsible for energy coupling to the transport system. The polypeptide is Spermidine/putrescine import ATP-binding protein PotA (Vibrio vulnificus (strain CMCP6)).